The chain runs to 140 residues: ATP synthase epsilon chain 1 (140 aa).

This sequence belongs to the ATPase epsilon chain family. F-type ATPases have 2 components, CF(1) - the catalytic core - and CF(0) - the membrane proton channel. CF(1) has five subunits: alpha(3), beta(3), gamma(1), delta(1), epsilon(1). CF(0) has three main subunits: a, b and c.

Its subcellular location is the cell inner membrane. Produces ATP from ADP in the presence of a proton gradient across the membrane. This Methylococcus capsulatus (strain ATCC 33009 / NCIMB 11132 / Bath) protein is ATP synthase epsilon chain 1.